A 490-amino-acid polypeptide reads, in one-letter code: Lignostilbene-alpha,beta-dioxygenase isozyme III (490 aa).

His167, His218, His285, and His477 together coordinate Fe cation.

Belongs to the carotenoid oxygenase family. In terms of assembly, homodimer of two beta subunits. It depends on Fe(2+) as a cofactor.

It carries out the reaction 1,2-bis(4-hydroxy-3-methoxyphenyl)ethylene + O2 = 2 vanillin. Its activity is regulated as follows. Activity is high with beta-5 type stilbene and minimal with beta-1 type stilbene. A 4-hydroxyl group and trans-stilbene structure is essential for the binding of substrates to the enzyme. Its function is as follows. Catalyzes the cleavage of the interphenyl double bond (C alpha-C beta) of lignin-derived polyphenolic diaryl-propane type compounds (Stilbene). This Sphingomonas paucimobilis (Pseudomonas paucimobilis) protein is Lignostilbene-alpha,beta-dioxygenase isozyme III.